Reading from the N-terminus, the 545-residue chain is Chaperonin GroEL (545 aa).

Residues 30–33 (TLGP), Lys-51, 87–91 (DGTTT), Gly-415, and Asp-496 contribute to the ATP site.

The protein belongs to the chaperonin (HSP60) family. As to quaternary structure, forms a cylinder of 14 subunits composed of two heptameric rings stacked back-to-back. Interacts with the co-chaperonin GroES.

It localises to the cytoplasm. The catalysed reaction is ATP + H2O + a folded polypeptide = ADP + phosphate + an unfolded polypeptide.. In terms of biological role, together with its co-chaperonin GroES, plays an essential role in assisting protein folding. The GroEL-GroES system forms a nano-cage that allows encapsulation of the non-native substrate proteins and provides a physical environment optimized to promote and accelerate protein folding. The sequence is that of Chaperonin GroEL from Haemophilus influenzae (strain 86-028NP).